The chain runs to 156 residues: Small ribosomal subunit protein uS7 (156 aa).

It belongs to the universal ribosomal protein uS7 family. Part of the 30S ribosomal subunit. Contacts proteins S9 and S11.

One of the primary rRNA binding proteins, it binds directly to 16S rRNA where it nucleates assembly of the head domain of the 30S subunit. Is located at the subunit interface close to the decoding center, probably blocks exit of the E-site tRNA. This is Small ribosomal subunit protein uS7 from Methylorubrum extorquens (strain CM4 / NCIMB 13688) (Methylobacterium extorquens).